Here is a 1323-residue protein sequence, read N- to C-terminus: Sister chromatid cohesion protein PDS5 homolog A-B (1323 aa).

One copy of the HEAT repeat lies at 385–421; that stretch reads FLVNDQLLGFVRERTLDKRWRVRKEAMMGLAQLYKKY. The disordered stretch occupies residues 1138 to 1323; sequence PLNATGRRPY…TAQRQIDLHR (186 aa). Positions 1153–1165 are enriched in low complexity; sequence SEISNNVSINSES. Polar residues-rich tracts occupy residues 1166-1176 and 1210-1220; these read DASVANRQSSE and LDQTAPSNTGT. The segment covering 1235 to 1246 has biased composition (basic and acidic residues); that stretch reads NIRKESEEKKVD.

In terms of assembly, interacts with the cohesin complex. Binds chromatin in a cohesin-dependent manner.

Its subcellular location is the nucleus. In terms of biological role, may regulate sister chromatid cohesion during mitosis and couple it to DNA replication. This is Sister chromatid cohesion protein PDS5 homolog A-B (pds5a-b) from Xenopus laevis (African clawed frog).